Reading from the N-terminus, the 643-residue chain is Protein tramtrack, beta isoform (643 aa).

Residues 33–98 enclose the BTB domain; that stretch reads TDVTLAVEGQ…MYRGEVSVDQ (66 aa). Disordered stretches follow at residues 118–148 and 171–300; these read EVND…PQLQ and ANAG…GLDT. Residue Lys-123 forms a Glycyl lysine isopeptide (Lys-Gly) (interchain with G-Cter in ubiquitin) linkage. A compositionally biased stretch (low complexity) spans 125–145; the sequence is SPAAAAAGAGATGSESTATTP. A compositionally biased stretch (polar residues) spans 176–187; it reads TPTLPVQPSLLS. Residues 192 to 201 are compositionally biased toward basic residues; the sequence is PKRKRGRPRK. Lys-201 is covalently cross-linked (Glycyl lysine isopeptide (Lys-Gly) (interchain with G-Cter in ubiquitin)). A compositionally biased stretch (basic and acidic residues) spans 254 to 285; that stretch reads HTDDLNESRDSLPSKRSKNSKDHRVVSHHEDN. Residues Lys-355, Lys-397, Lys-418, Lys-457, Lys-478, and Lys-480 each participate in a glycyl lysine isopeptide (Lys-Gly) (interchain with G-Cter in ubiquitin) cross-link. C2H2-type zinc fingers lie at residues 508–531 and 538–561; these read YRCK…VTSH and YPCP…KIIH. Lys-545 is covalently cross-linked (Glycyl lysine isopeptide (Lys-Gly) (interchain with G-Cter in ubiquitin)). Residues 584–643 form a disordered region; sequence GVSGASTPPPPDLSGQNSNQSLPATSNALSTSSSSSTSSSSGSLGPLTTSAPPAPAAAAQ. Low complexity predominate over residues 604-643; that stretch reads SLPATSNALSTSSSSSTSSSSGSLGPLTTSAPPAPAAAAQ.

In terms of assembly, can form homodimers. Interacts with Trl in vivo via the BTB domain. Interacts with phyl. Interacts with Usp47. In terms of processing, polyubiquitinated by sina. Polyubiquitin linkage is mainly through 'Lys-48', but linkage through 'Lys-63' also occurs. Deubiquitination by Usp47 leads to its stabilization.

The protein resides in the nucleus. Its function is as follows. Binds to a number of sites in the transcriptional regulatory region of ftz. Isoform beta is required to repress inappropriate segmentation gene transcription and repress genes incompatible with development of photoreceptor cell fates. Probable repressor of the transcription of the segmentation genes ftz, eve, h, odd, run, and en. Inhibits Trl-dependent activation of eve. May bind to the region AGGGC/TGG. Degradation of ttk is directed by binding of sinah or sina, via the adapter molecule phyl which binds to the BTB domain of ttk. A second method of degradation exists that is phyl-independent, this is mediated by recognition of motifs in the C-terminus of ttk. The sequence is that of Protein tramtrack, beta isoform (ttk) from Drosophila melanogaster (Fruit fly).